A 122-amino-acid chain; its full sequence is Small ribosomal subunit protein uS13 (122 aa).

Positions 97–122 are disordered; sequence PVRGQRTKTNARTRKGPARTVAGKKK.

The protein belongs to the universal ribosomal protein uS13 family. Part of the 30S ribosomal subunit. Forms a loose heterodimer with protein S19. Forms two bridges to the 50S subunit in the 70S ribosome.

Located at the top of the head of the 30S subunit, it contacts several helices of the 16S rRNA. In the 70S ribosome it contacts the 23S rRNA (bridge B1a) and protein L5 of the 50S subunit (bridge B1b), connecting the 2 subunits; these bridges are implicated in subunit movement. Contacts the tRNAs in the A and P-sites. The chain is Small ribosomal subunit protein uS13 from Pelobacter propionicus (strain DSM 2379 / NBRC 103807 / OttBd1).